The primary structure comprises 453 residues: Verruculogen prenyltransferase (453 aa).

Substrate is bound at residue Glu89. Residues Arg102, Lys194, Tyr196, Lys273, Tyr275, Tyr378, Tyr443, and Tyr447 each contribute to the dimethylallyl diphosphate site.

This sequence belongs to the tryptophan dimethylallyltransferase family.

It catalyses the reaction verruculogen + dimethylallyl diphosphate = fumitremorgin A + diphosphate. It functions in the pathway mycotoxin biosynthesis. Verruculogen prenyltransferase; part of the gene cluster that mediates the biosynthesis of fumitremorgins, indole alkaloids that carry not only intriguing chemical structures, but also interesting biological and pharmacological activities. The biosynthesis of fumitremorgin-type alkaloids begins by condensation of the two amino acids L-tryptophan and L-proline to brevianamide F, catalyzed by the non-ribosomal peptide synthetase ftmPS/ftmA. Brevianamide F is then prenylated by the prenyltransferase ftmPT1/ftmB in the presence of dimethylallyl diphosphate, resulting in the formation of tryprostatin B. The three cytochrome P450 monooxygenases, ftmP450-1/ftmC, ftmP450-2/ftmE and ftmP450-3/FtmG, are responsible for the conversion of tryprostatin B to 6-hydroxytryprostatin B, tryprostatin A to fumitremorgin C and fumitremorgin C to 12,13-dihydroxyfumitremorgin C, respectively. The putative methyltransferase ftmMT/ftmD is expected for the conversion of 6-hydroxytryprostatin B to tryprostatin A. FtmPT2/FtmH catalyzes the prenylation of 12,13-dihydroxyfumitre-morgin C in the presence of dimethylallyl diphosphate, resulting in the formation of fumitremorgin B. Fumitremorgin B is further converted to verruculogen by ftmOx1/ftmF via the insertion of an endoperoxide bond between the two prenyl moieties. Finally, verruculogen is further converted to fumitremorgin A by the verruculogen prenyltransferase ftmPT3. This Neosartorya fischeri (strain ATCC 1020 / DSM 3700 / CBS 544.65 / FGSC A1164 / JCM 1740 / NRRL 181 / WB 181) (Aspergillus fischerianus) protein is Verruculogen prenyltransferase.